Here is a 411-residue protein sequence, read N- to C-terminus: Putative ion-transport protein YfeO (411 aa).

Transmembrane regions (helical) follow at residues 9 to 29 (MLLLSLPALIIGVASSLVLIA), 54 to 74 (DSPFWIVGMLTLTGVVVGLII), 99 to 119 (ALPGLLLALIIGLAGGVSLGP), 149 to 169 (ILASAGTIGALFGTPVAAALI), 186 to 206 (LFAPLMAAAAGSLTTSLFFHP), 223 to 243 (IASGAIVAAIAIAAGMVAVWC), 258 to 278 (VLILGIGGFILGILGVIGGPL), 296 to 316 (LGAGDYFTLAVVKLAALVIAA), 322 to 342 (GGRIFPAVFIGAALGLMLHAH), 343 to 363 (VEAVPAAITVSCAILGLVLVV), and 386 to 406 (LLCIVMLPAWLLLAGKPLLAA).

Belongs to the chloride channel (TC 2.A.49) family.

It is found in the cell membrane. In Salmonella choleraesuis (strain SC-B67), this protein is Putative ion-transport protein YfeO.